The primary structure comprises 644 residues: Exoribonuclease 2 (644 aa).

The RNB domain occupies 189–516; the sequence is REDLTALDFV…NHRLLKAVIK (328 aa). Residues 561–643 form the S1 motif domain; the sequence is DTRFAAEIVD…ETRSIIARPV (83 aa).

It belongs to the RNR ribonuclease family. RNase II subfamily.

Its subcellular location is the cytoplasm. The catalysed reaction is Exonucleolytic cleavage in the 3'- to 5'-direction to yield nucleoside 5'-phosphates.. Functionally, involved in mRNA degradation. Hydrolyzes single-stranded polyribonucleotides processively in the 3' to 5' direction. The protein is Exoribonuclease 2 of Escherichia coli O8 (strain IAI1).